The chain runs to 219 residues: Ribose-5-phosphate isomerase A (219 aa).

Residues 28 to 31 (TGST), 81 to 84 (DGAD), and 94 to 97 (KGGG) each bind substrate. The Proton acceptor role is filled by Glu103. Lys121 provides a ligand contact to substrate.

Belongs to the ribose 5-phosphate isomerase family. As to quaternary structure, homodimer.

It catalyses the reaction aldehydo-D-ribose 5-phosphate = D-ribulose 5-phosphate. Its pathway is carbohydrate degradation; pentose phosphate pathway; D-ribose 5-phosphate from D-ribulose 5-phosphate (non-oxidative stage): step 1/1. Its function is as follows. Catalyzes the reversible conversion of ribose-5-phosphate to ribulose 5-phosphate. This chain is Ribose-5-phosphate isomerase A, found in Edwardsiella ictaluri (strain 93-146).